The primary structure comprises 439 residues: Structure-specific endonuclease subunit SLX1 homolog (439 aa).

Disordered stretches follow at residues 1-28 (METF…GVPK) and 117-140 (DDDD…LRAL). Over residues 125–136 (ESSTEHADDDLN) the composition is skewed to basic and acidic residues. Residues 166-253 (EFYGVYCLIS…PAVSKSLKEK (88 aa)) form the GIY-YIG domain. The SLX1-type zinc finger occupies 335–390 (CRLCGKDIEKLWGLVRCISQSCHSHFHSKCLAEHGLKNKNEYADQIYPLKSNCPIC).

The protein belongs to the SLX1 family. Forms a heterodimer with him-18/slx-4. A divalent metal cation serves as cofactor.

The protein resides in the nucleus. In terms of biological role, catalytic subunit of a heterodimeric structure-specific endonuclease that resolves DNA secondary structures generated during DNA repair and recombination. Has endonuclease activity towards branched DNA substrates, introducing single-strand cuts in duplex DNA close to junctions with ss-DNA (Potential). Has a preference for replication forks over 5' flap structures or Holliday junctions and shows much lower activity toward 3' flap structures. Required for proper crossover distribution through inhibition of crossover formation at the central region of chromosomes. The chain is Structure-specific endonuclease subunit SLX1 homolog from Caenorhabditis briggsae.